Reading from the N-terminus, the 124-residue chain is Large ribosomal subunit protein uL22 (124 aa).

This sequence belongs to the universal ribosomal protein uL22 family. In terms of assembly, part of the 50S ribosomal subunit.

Its function is as follows. This protein binds specifically to 23S rRNA; its binding is stimulated by other ribosomal proteins, e.g. L4, L17, and L20. It is important during the early stages of 50S assembly. It makes multiple contacts with different domains of the 23S rRNA in the assembled 50S subunit and ribosome. The globular domain of the protein is located near the polypeptide exit tunnel on the outside of the subunit, while an extended beta-hairpin is found that lines the wall of the exit tunnel in the center of the 70S ribosome. In Campylobacter lari (strain RM2100 / D67 / ATCC BAA-1060), this protein is Large ribosomal subunit protein uL22.